We begin with the raw amino-acid sequence, 617 residues long: DNA-(apurinic or apyrimidinic site) endonuclease (617 aa).

Positions 74-99 are disordered; that stretch reads IKNSDEQNNSNNNNNNSSSSNFCSNN. Residues 81–99 are compositionally biased toward low complexity; it reads NNSNNNNNNSSSSNFCSNN. Mg(2+) is bound by residues Asn-284 and Glu-317. The segment at 326-349 is disordered; sequence SEPCDNKNKNKNKNDGIRDRGKIK. Residues 329 to 349 are compositionally biased toward basic and acidic residues; that stretch reads CDNKNKNKNKNDGIRDRGKIK. Residues Asp-474, Asn-476, Asp-606, and His-607 each contribute to the Mg(2+) site. The active-site Proton acceptor is His-607.

This sequence belongs to the DNA repair enzymes AP/ExoA family. It depends on Mg(2+) as a cofactor. Requires Mn(2+) as cofactor. Post-translationally, may be proteolytically cleaved into a 64 kDa form.

It localises to the mitochondrion. The enzyme catalyses Exonucleolytic cleavage in the 3'- to 5'-direction to yield nucleoside 5'-phosphates.. With respect to regulation, apurinic/apyrimidinic (AP) endonuclease activity is maximal at low Mg(2+) (0.5-2 mM) with no activity seen at high concentrations (more than 10 mM). 3'-5' exonuclease activity is maximal in the range of 0.5-2 mM Mg(2+) with activity seen up to 10 mM Mg(2+). Multifunctional protein that plays a central role in mitochondrial DNA base excision repair (BER) pathway induced by oxidative stress. Has apurinic/apyrimidinic (AP) endonuclease activity towards double-stranded DNA (dsDNA). Has nucleotide incision repair (NIR) activity; acts on dsDNA with oxidized bases thymine glycol and 5,6-dihydro-2'-deoxyuridine. Has 3'-5' exonuclease; can use dsDNA templates with 3'-OH termini including blunt-end, gapped and mismatched 3'-recessed. Has 3'-phosphatase activity; cleaves 3'-phosphate from blunt, recessed and gapped dsDNA templates, followed by 3'-5' exonuclease activity. Has RNase H-like activity; cleaves RNA on 3'-recessed RNA-DNA duplex. Plays a role in merosome infection of host erythrocytes. This chain is DNA-(apurinic or apyrimidinic site) endonuclease, found in Plasmodium falciparum (isolate 3D7).